Reading from the N-terminus, the 211-residue chain is Ribosomal RNA small subunit methyltransferase G (211 aa).

Residues Gly-76, Leu-81, 127–128 (VE), and Arg-142 each bind S-adenosyl-L-methionine.

This sequence belongs to the methyltransferase superfamily. RNA methyltransferase RsmG family.

It is found in the cytoplasm. The catalysed reaction is guanosine(527) in 16S rRNA + S-adenosyl-L-methionine = N(7)-methylguanosine(527) in 16S rRNA + S-adenosyl-L-homocysteine. Functionally, specifically methylates the N7 position of guanine in position 527 of 16S rRNA. The polypeptide is Ribosomal RNA small subunit methyltransferase G (Vibrio campbellii (strain ATCC BAA-1116)).